Reading from the N-terminus, the 140-residue chain is Probable NADH dehydrogenase [ubiquinone] iron-sulfur protein 6, mitochondrial (140 aa).

The protein belongs to the complex I NDUFS6 subunit family. As to quaternary structure, complex I is composed of 45 different subunits. This is a component of the iron-sulfur (IP) fragment of the enzyme.

It is found in the mitochondrion inner membrane. Its function is as follows. Accessory subunit of the mitochondrial membrane respiratory chain NADH dehydrogenase (Complex I), that is believed not to be involved in catalysis. Complex I functions in the transfer of electrons from NADH to the respiratory chain. The immediate electron acceptor for the enzyme is believed to be ubiquinone. The protein is Probable NADH dehydrogenase [ubiquinone] iron-sulfur protein 6, mitochondrial (nduf-6) of Caenorhabditis elegans.